Reading from the N-terminus, the 608-residue chain is Isocitrate dehydrogenase kinase/phosphatase (608 aa).

Residues 327-333 and K348 contribute to the ATP site; that span reads APGIKGL. Residue D383 is part of the active site.

This sequence belongs to the AceK family.

It localises to the cytoplasm. The enzyme catalyses L-seryl-[isocitrate dehydrogenase] + ATP = O-phospho-L-seryl-[isocitrate dehydrogenase] + ADP + H(+). Bifunctional enzyme which can phosphorylate or dephosphorylate isocitrate dehydrogenase (IDH) on a specific serine residue. This is a regulatory mechanism which enables bacteria to bypass the Krebs cycle via the glyoxylate shunt in response to the source of carbon. When bacteria are grown on glucose, IDH is fully active and unphosphorylated, but when grown on acetate or ethanol, the activity of IDH declines drastically concomitant with its phosphorylation. This is Isocitrate dehydrogenase kinase/phosphatase from Burkholderia ambifaria (strain ATCC BAA-244 / DSM 16087 / CCUG 44356 / LMG 19182 / AMMD) (Burkholderia cepacia (strain AMMD)).